The chain runs to 378 residues: Erythronate-4-phosphate dehydrogenase (378 aa).

Residues serine 45 and threonine 66 each contribute to the substrate site. 2 residues coordinate NAD(+): aspartate 146 and threonine 175. Residue arginine 208 is part of the active site. Aspartate 232 contributes to the NAD(+) binding site. Glutamate 237 is a catalytic residue. Histidine 254 (proton donor) is an active-site residue. Position 257 (glycine 257) interacts with NAD(+). Tyrosine 258 is a substrate binding site.

The protein belongs to the D-isomer specific 2-hydroxyacid dehydrogenase family. PdxB subfamily. Homodimer.

The protein resides in the cytoplasm. The enzyme catalyses 4-phospho-D-erythronate + NAD(+) = (R)-3-hydroxy-2-oxo-4-phosphooxybutanoate + NADH + H(+). Its pathway is cofactor biosynthesis; pyridoxine 5'-phosphate biosynthesis; pyridoxine 5'-phosphate from D-erythrose 4-phosphate: step 2/5. In terms of biological role, catalyzes the oxidation of erythronate-4-phosphate to 3-hydroxy-2-oxo-4-phosphonooxybutanoate. The sequence is that of Erythronate-4-phosphate dehydrogenase from Escherichia coli O7:K1 (strain IAI39 / ExPEC).